We begin with the raw amino-acid sequence, 123 residues long: Fluoride-specific ion channel FluC 2 (123 aa).

Transmembrane regions (helical) follow at residues 1–21 (MTML…FLLD) and 30–50 (VPVP…LGLI). Residues G74 and T77 each coordinate Na(+). The helical transmembrane segment at 99 to 119 (ALHCMGMAIAGVLAAILGLAL) threads the bilayer.

The protein belongs to the fluoride channel Fluc/FEX (TC 1.A.43) family.

It is found in the cell membrane. It catalyses the reaction fluoride(in) = fluoride(out). Its activity is regulated as follows. Na(+) is not transported, but it plays an essential structural role and its presence is essential for fluoride channel function. In terms of biological role, fluoride-specific ion channel. Important for reducing fluoride concentration in the cell, thus reducing its toxicity. This chain is Fluoride-specific ion channel FluC 2, found in Cutibacterium acnes (strain DSM 16379 / KPA171202) (Propionibacterium acnes).